A 320-amino-acid chain; its full sequence is Acetyl-coenzyme A carboxylase carboxyl transferase subunit alpha (320 aa).

Residues 41–295 enclose the CoA carboxyltransferase C-terminal domain; it reads KIEEKAQQAL…GDAIAAAFAE (255 aa).

The protein belongs to the AccA family. As to quaternary structure, acetyl-CoA carboxylase is a heterohexamer composed of biotin carboxyl carrier protein (AccB), biotin carboxylase (AccC) and two subunits each of ACCase subunit alpha (AccA) and ACCase subunit beta (AccD).

It is found in the cytoplasm. The enzyme catalyses N(6)-carboxybiotinyl-L-lysyl-[protein] + acetyl-CoA = N(6)-biotinyl-L-lysyl-[protein] + malonyl-CoA. The protein operates within lipid metabolism; malonyl-CoA biosynthesis; malonyl-CoA from acetyl-CoA: step 1/1. Component of the acetyl coenzyme A carboxylase (ACC) complex. First, biotin carboxylase catalyzes the carboxylation of biotin on its carrier protein (BCCP) and then the CO(2) group is transferred by the carboxyltransferase to acetyl-CoA to form malonyl-CoA. This Rhodopseudomonas palustris (strain ATCC BAA-98 / CGA009) protein is Acetyl-coenzyme A carboxylase carboxyl transferase subunit alpha.